The sequence spans 270 residues: Phosphatidylglycerol--prolipoprotein diacylglyceryl transferase (270 aa).

Helical transmembrane passes span 17–37 (LAIH…MFLG), 63–83 (ILFL…CLFY), and 95–115 (IFYI…VIAS). Residue R146 participates in a 1,2-diacyl-sn-glycero-3-phospho-(1'-sn-glycerol) binding. The next 3 helical transmembrane spans lie at 182–202 (SQVY…WLYA), 209–229 (GEVA…AEYF), and 243–263 (MSMG…LWVW).

The protein belongs to the Lgt family.

The protein resides in the cell inner membrane. The catalysed reaction is L-cysteinyl-[prolipoprotein] + a 1,2-diacyl-sn-glycero-3-phospho-(1'-sn-glycerol) = an S-1,2-diacyl-sn-glyceryl-L-cysteinyl-[prolipoprotein] + sn-glycerol 1-phosphate + H(+). It functions in the pathway protein modification; lipoprotein biosynthesis (diacylglyceryl transfer). In terms of biological role, catalyzes the transfer of the diacylglyceryl group from phosphatidylglycerol to the sulfhydryl group of the N-terminal cysteine of a prolipoprotein, the first step in the formation of mature lipoproteins. This is Phosphatidylglycerol--prolipoprotein diacylglyceryl transferase from Paracidovorax citrulli (strain AAC00-1) (Acidovorax citrulli).